The following is a 164-amino-acid chain: 3-hydroxyacyl-[acyl-carrier-protein] dehydratase FabZ (164 aa).

H70 is a catalytic residue.

It belongs to the thioester dehydratase family. FabZ subfamily.

It is found in the cytoplasm. It carries out the reaction a (3R)-hydroxyacyl-[ACP] = a (2E)-enoyl-[ACP] + H2O. Involved in unsaturated fatty acids biosynthesis. Catalyzes the dehydration of short chain beta-hydroxyacyl-ACPs and long chain saturated and unsaturated beta-hydroxyacyl-ACPs. The protein is 3-hydroxyacyl-[acyl-carrier-protein] dehydratase FabZ of Synechocystis sp. (strain ATCC 27184 / PCC 6803 / Kazusa).